The following is a 293-amino-acid chain: Pantothenate synthetase (293 aa).

38-45 (MGALHEGH) is an ATP binding site. The active-site Proton donor is H45. Q69 contributes to the (R)-pantoate binding site. Q69 provides a ligand contact to beta-alanine. ATP is bound at residue 155–158 (GEKD). Q161 serves as a coordination point for (R)-pantoate. Residue 192–195 (QSSR) coordinates ATP.

Belongs to the pantothenate synthetase family. As to quaternary structure, homodimer.

Its subcellular location is the cytoplasm. It catalyses the reaction (R)-pantoate + beta-alanine + ATP = (R)-pantothenate + AMP + diphosphate + H(+). It participates in cofactor biosynthesis; (R)-pantothenate biosynthesis; (R)-pantothenate from (R)-pantoate and beta-alanine: step 1/1. Its function is as follows. Catalyzes the condensation of pantoate with beta-alanine in an ATP-dependent reaction via a pantoyl-adenylate intermediate. This is Pantothenate synthetase from Hyphomonas neptunium (strain ATCC 15444).